A 212-amino-acid chain; its full sequence is Large ribosomal subunit protein uL3 (212 aa).

The interval 130–158 is disordered; the sequence is KRGSMTHGSKNHRLPGSTGAGTTPGRVYP.

It belongs to the universal ribosomal protein uL3 family. As to quaternary structure, part of the 50S ribosomal subunit. Forms a cluster with proteins L14 and L19.

Its function is as follows. One of the primary rRNA binding proteins, it binds directly near the 3'-end of the 23S rRNA, where it nucleates assembly of the 50S subunit. The protein is Large ribosomal subunit protein uL3 of Gloeothece citriformis (strain PCC 7424) (Cyanothece sp. (strain PCC 7424)).